The primary structure comprises 160 residues: Large ribosomal subunit protein eL21 (160 aa).

It belongs to the eukaryotic ribosomal protein eL21 family. In terms of assembly, component of the large ribosomal subunit. Mature ribosomes consist of a small (40S) and a large (60S) subunit. The 40S subunit contains about 32 different proteins and 1 molecule of RNA (18S). The 60S subunit contains 45 different proteins and 3 molecules of RNA (25S, 5.8S and 5S).

It is found in the cytoplasm. Functionally, component of the ribosome, a large ribonucleoprotein complex responsible for the synthesis of proteins in the cell. The small ribosomal subunit (SSU) binds messenger RNAs (mRNAs) and translates the encoded message by selecting cognate aminoacyl-transfer RNA (tRNA) molecules. The large subunit (LSU) contains the ribosomal catalytic site termed the peptidyl transferase center (PTC), which catalyzes the formation of peptide bonds, thereby polymerizing the amino acids delivered by tRNAs into a polypeptide chain. The nascent polypeptides leave the ribosome through a tunnel in the LSU and interact with protein factors that function in enzymatic processing, targeting, and the membrane insertion of nascent chains at the exit of the ribosomal tunnel. The polypeptide is Large ribosomal subunit protein eL21 (Candida albicans (strain SC5314 / ATCC MYA-2876) (Yeast)).